A 70-amino-acid chain; its full sequence is Probable tautomerase RSp0893 (70 aa).

Residue Pro-2 is the Proton acceptor; via imino nitrogen of the active site.

The protein belongs to the 4-oxalocrotonate tautomerase family.

This is Probable tautomerase RSp0893 from Ralstonia nicotianae (strain ATCC BAA-1114 / GMI1000) (Ralstonia solanacearum).